A 462-amino-acid chain; its full sequence is dTDP-4-dehydro-2,6-dideoxy-D-glucose 3-dehydratase (462 aa).

Residues 112 to 113 (GS), aspartate 220, and serine 241 contribute to the pyridoxal 5'-phosphate site. Histidine 246 functions as the Proton donor/acceptor in the catalytic mechanism. Asparagine 314 contributes to the pyridoxal 5'-phosphate binding site.

The protein belongs to the DegT/DnrJ/EryC1 family. As to quaternary structure, homodimer. Pyridoxal 5'-phosphate is required as a cofactor.

The catalysed reaction is dTDP-4-dehydro-2,6-dideoxy-alpha-D-glucose + 2 reduced [2Fe-2S]-[ferredoxin] + 2 H(+) = dTDP-4-dehydro-2,3,6-trideoxy-alpha-D-hexopyranose + 2 oxidized [2Fe-2S]-[ferredoxin] + H2O. Its function is as follows. Involved in the biosynthesis of forosamine ((4-dimethylamino)-2,3,4,6-tetradeoxy-alpha-D-threo-hexopyranose), a highly deoxygenated sugar component of several bioactive natural products such as the insecticidal spinosyns A and D. Catalyzes C-3 deoxygenation of dTDP-4-keto-2,6-dideoxy-alpha-D-glucose to yield dTDP-4-keto-2,3,6-trideoxy-D-glucose via a combined transamination-deoxygenation reaction. The catalysis is initiated by a transamination step in which pyridoxal 5'-phosphate (PLP) is converted to pyridoxamine 5'-phosphate (PMP) in the presence of L-glutamate. This coenzyme then forms a Schiff base with dTDP-4-keto-2,6-dideoxy-alpha-D-glucose and the resulting adduct undergoes a PMP-mediated beta-dehydration reaction to give a sugar enamine intermediate, which after a 2 electrons reduction and hydrolysis yields dTDP-4-keto-2,3,6-trideoxy-D-glucose as a product. Requires cellular reductase (ferredoxin or flavodoxin reductase) rather than a specific partner reductase. L-glutamate is 20-fold more efficient than L-aspartate as an amino donor. In the absence of an electron source and in the presence of L-glutamate, catalyzes a transamination reaction, converting dTDP-4-keto-2,6-dideoxy-alpha-D-glucose to dTDP-4-amino-2,4,6-trideoxy-D-glucose. The protein is dTDP-4-dehydro-2,6-dideoxy-D-glucose 3-dehydratase of Saccharopolyspora spinosa.